We begin with the raw amino-acid sequence, 191 residues long: MAVSLVKGGNVSLTKEAPTMNVAMVGLGWDARVTDGQGFDLDASVFAVGEDGKVLSDAHFIFFNNKTSPDGAVEHQGDNRTGEGDGDDEQVKIDLTKVSADIKKLVFAVTIYDAEARKQNFGMVSNSFMRVYNNDNGTEIARFDLSEDASTETAMVFGELYRHGAEWKFKAVGQGFAGGLAALASQHGVNI.

It belongs to the CAPAB/TerDEXZ family.

In terms of biological role, not known; seems to contribute to the tellurium resistance (Ter) mechanism. Also involved in phage inhibition (Phi) and colicin resistance (PacB). The sequence is that of Tellurium resistance protein TerE (terE) from Serratia marcescens.